The following is a 228-amino-acid chain: MKAVVLLSGGLDSSTALYKAKADGADCYAISFDYRQRHRQELDSAVAIAQSAQVTQHQIVAFDLTLWGGSALTDTQIDLPSRSIEEMADHIPVTYVPARNSIFLSFALAYAETISAEQVYIGVNQLDYSGYPDCRPDFIQAMQEVFRLGTKLGREGQAIEICTPLINLHKSAIIELGNDLGVPWEQTWSCYSDGGGSPPLACGQCDSCQLRLAAFAQLGLSDPLSYAT.

7–17 (LSGGLDSSTAL) is a binding site for ATP. Residues Cys-190, Cys-202, Cys-205, and Cys-208 each coordinate Zn(2+).

The protein belongs to the QueC family. The cofactor is Zn(2+).

It catalyses the reaction 7-carboxy-7-deazaguanine + NH4(+) + ATP = 7-cyano-7-deazaguanine + ADP + phosphate + H2O + H(+). It functions in the pathway purine metabolism; 7-cyano-7-deazaguanine biosynthesis. In terms of biological role, catalyzes the ATP-dependent conversion of 7-carboxy-7-deazaguanine (CDG) to 7-cyano-7-deazaguanine (preQ(0)). In Acaryochloris marina (strain MBIC 11017), this protein is 7-cyano-7-deazaguanine synthase.